Consider the following 73-residue polypeptide: DNA-directed RNA polymerase subunit omega (73 aa).

It belongs to the RNA polymerase subunit omega family. As to quaternary structure, the RNAP catalytic core consists of 2 alpha, 1 beta, 1 beta' and 1 omega subunit. When a sigma factor is associated with the core the holoenzyme is formed, which can initiate transcription.

The enzyme catalyses RNA(n) + a ribonucleoside 5'-triphosphate = RNA(n+1) + diphosphate. Promotes RNA polymerase assembly. Latches the N- and C-terminal regions of the beta' subunit thereby facilitating its interaction with the beta and alpha subunits. The sequence is that of DNA-directed RNA polymerase subunit omega from Oleidesulfovibrio alaskensis (strain ATCC BAA-1058 / DSM 17464 / G20) (Desulfovibrio alaskensis).